Consider the following 139-residue polypeptide: Chorion protein S16 (139 aa).

Residues 1–21 (MSVNYMRLLCLMACCFSVCLA) form the signal peptide.

The protein belongs to the chorion protein S16 family.

It is found in the secreted. Functionally, chorion membrane (egg shell) protein; plays a role in protecting the egg from the environment. This is Chorion protein S16 (Cp16) from Drosophila virilis (Fruit fly).